Reading from the N-terminus, the 740-residue chain is Probable RNA-dependent RNA polymerase 1 (740 aa).

Belongs to the RdRP family.

It catalyses the reaction RNA(n) + a ribonucleoside 5'-triphosphate = RNA(n+1) + diphosphate. In terms of biological role, probably involved in the RNA silencing pathway and required for the generation of small interfering RNAs (siRNAs). The chain is Probable RNA-dependent RNA polymerase 1 (RDR1) from Oryza sativa subsp. japonica (Rice).